Here is a 66-residue protein sequence, read N- to C-terminus: Large ribosomal subunit protein bL35 (66 aa).

A compositionally biased stretch (basic residues) spans 1 to 26 (MPKMKTHRGGAKRVKRTGSGKLKRSR). 2 disordered regions span residues 1–28 (MPKMKTHRGGAKRVKRTGSGKLKRSRAY) and 36–55 (KSTKQKRGLRKASLVSKGDQ).

This sequence belongs to the bacterial ribosomal protein bL35 family.

This chain is Large ribosomal subunit protein bL35, found in Macrococcus caseolyticus (strain JCSC5402) (Macrococcoides caseolyticum).